A 220-amino-acid chain; its full sequence is Deep-sea actinoporin Cjtox I (220 aa).

The first 19 residues, 1-19 (MNRLIILCLVAATIYSTIA), serve as a signal peptide directing secretion. The propeptide occupies 20 to 42 (LPMKEDISNEERPTSVNEKPVKK). Ser-96, Val-128, Ser-146, Pro-148, Tyr-174, Tyr-178, and Tyr-179 together coordinate phosphocholine. The tract at residues 146-161 (SVPYDYNWYSNWWNIK) is trp-rich region, which is important for the binding to lipid membrane. The Cell attachment site, crucial for protein stability motif lies at 185 to 187 (KGN).

This sequence belongs to the actinoporin family. Sea anemone subfamily. Octamer or nonamer in membranes. Monomer in the soluble state. In terms of tissue distribution, expressed in tentacles.

Its subcellular location is the secreted. The protein resides in the nematocyst. The protein localises to the target cell membrane. In terms of biological role, probably acts in predation. Pore-forming protein that forms cations-selective hydrophilic pores of around 1 nm and causes cytolysis. Pore formation is a multi-step process that involves specific recognition of membrane sphingomyelin (but neither cholesterol nor phosphatidylcholine) using aromatic rich region and adjacent phosphocholine (POC) binding site, firm binding to the membrane (mainly driven by hydrophobic interactions) accompanied by the transfer of the N-terminal region to the lipid-water interface and finally pore formation after oligomerization of monomers. Shows hemolytic activity on equine erythrocytes. Hemolysis is moderately inhibited in presence of sphingomyelin, suggesting that this protein targets sphingomyelin. The polypeptide is Deep-sea actinoporin Cjtox I (Cribrinopsis japonica (Deep-sea anemone)).